The chain runs to 508 residues: 2,3-bisphosphoglycerate-independent phosphoglycerate mutase (508 aa).

Mn(2+)-binding residues include Asp-9 and Ser-59. Ser-59 serves as the catalytic Phosphoserine intermediate. Substrate-binding positions include His-120, 149-150 (RD), Arg-181, Arg-187, 254-257 (RADR), and Lys-331. The Mn(2+) site is built by Asp-398, His-402, Asp-439, His-440, and His-456.

This sequence belongs to the BPG-independent phosphoglycerate mutase family. Mn(2+) is required as a cofactor.

It catalyses the reaction (2R)-2-phosphoglycerate = (2R)-3-phosphoglycerate. The protein operates within carbohydrate degradation; glycolysis; pyruvate from D-glyceraldehyde 3-phosphate: step 3/5. In terms of biological role, catalyzes the interconversion of 2-phosphoglycerate and 3-phosphoglycerate. This is 2,3-bisphosphoglycerate-independent phosphoglycerate mutase from Halobacterium salinarum (strain ATCC 700922 / JCM 11081 / NRC-1) (Halobacterium halobium).